A 755-amino-acid polypeptide reads, in one-letter code: 17S U2 SnRNP complex component HTATSF1 (755 aa).

2 disordered regions span residues 1-53 and 81-122; these read MSGT…YEWD and GASS…KAES. Ser-2 carries the N-acetylserine modification. Basic and acidic residues predominate over residues 90-122; it reads EDVHARTAEEPPQEKAPEPTDARKKGEKRKAES. RRM domains follow at residues 133 to 218 and 264 to 349; these read TNVY…VAKF and RVVI…AWDG. The segment at 259–353 is U2AF homology motif (UHM); that stretch reads RMRHERVVII…AQAWDGTTDY (95 aa). At Lys-297 the chain carries N6-acetyllysine. The disordered stretch occupies residues 380–415; that stretch reads RGLRRSDSVSASERAGPSRARHFSEHPSTSKMNAQE. Residues 381 to 755 form a mediates interaction with the P-TEFb complex region; that stretch reads GLRRSDSVSA…LSSDDDDDDI (375 aa). Ser-387, Ser-403, Ser-407, and Ser-409 each carry phosphoserine. Residues 405 to 415 are compositionally biased toward polar residues; sequence HPSTSKMNAQE. Glycyl lysine isopeptide (Lys-Gly) (interchain with G-Cter in SUMO2) cross-links involve residues Lys-429 and Lys-430. Residues 433–755 form a disordered region; it reads KTEDGGEFEE…LSSDDDDDDI (323 aa). Residues Ser-445, Ser-452, and Ser-453 each carry the phosphoserine modification. Over residues 462–476 the composition is skewed to basic and acidic residues; the sequence is CPEKESEEGCPKRGF. 6 positions are modified to phosphoserine: Ser-481, Ser-485, Ser-494, Ser-498, Ser-521, and Ser-529. Basic and acidic residues predominate over residues 508-538; the sequence is LKNDCEENGLAKESEDDLNKESEEEVGPTKE. Positions 539–552 are enriched in acidic residues; sequence SEEDDSEKESDEDC. The span at 553–563 shows a compositional bias: basic and acidic residues; sequence SEKQSEDGSER. 3 positions are modified to phosphoserine: Ser-557, Ser-561, and Ser-579. The span at 564–579 shows a compositional bias: acidic residues; the sequence is EFEENGLEKDLDEEGS. The segment covering 580–590 has biased composition (basic and acidic residues); sequence EKELHENVLDK. Acidic residues predominate over residues 591–606; the sequence is ELEENDSENSEFEDDG. Ser-597, Ser-600, Ser-607, Ser-616, and Ser-624 each carry phosphoserine. Acidic residues-rich tracts occupy residues 613-633 and 640-651; these read EEGS…EEDT and DESDEKEDEEYA. Thr-633 is subject to Phosphothreonine. Ser-642 bears the Phosphoserine mark. A compositionally biased stretch (basic and acidic residues) spans 652 to 674; sequence DEKGLEAADKKAEEGDADEKLFE. Positions 675–713 are enriched in acidic residues; that stretch reads ESDDKEDEDADGKEVEDADEKLFEDDDSNEKLFDEEEDS. 5 positions are modified to phosphoserine: Ser-676, Ser-702, Ser-713, Ser-714, and Ser-721. Residues 714–725 are compositionally biased toward basic and acidic residues; it reads SEKLFDDSDERG. Ser-748 carries the phosphoserine; by CK2 modification.

It belongs to the HTATSF1 family. As to quaternary structure, component of the 17S U2 SnRNP complex, a ribonucleoprotein complex that contains small nuclear RNA (snRNA) U2 and a number of specific proteins. Within the 17S U2 SnRNP complex, interacts (via UHM region) directly with SF3B1. Component of a complex which is at least composed of HTATSF1/Tat-SF1, the P-TEFb complex components CDK9 and CCNT1, RNA polymerase II, SUPT5H, and NCL/nucleolin. Interacts with GTF2F2/RAP30 and POLR2A. Interacts with TCERG1/CA150. Interacts with (poly-ADP-ribosylated) RPA1; promoting HTATSF1 recruitment to DNA damage sites. Interacts (when phosphorylated) with TOPBP1; promoting recruitment of TOPBP1 to DNA damage sites during S-phase. Phosphorylation at Ser-748 by CK2 during S-phase in response to DNA damage promotes interaction with TOPBP1 and double-strand break (DSB) repair via homologous recombination. Widely expressed.

The protein resides in the nucleus. Its subcellular location is the chromosome. Component of the 17S U2 SnRNP complex of the spliceosome, a large ribonucleoprotein complex that removes introns from transcribed pre-mRNAs. The 17S U2 SnRNP complex (1) directly participates in early spliceosome assembly and (2) mediates recognition of the intron branch site during pre-mRNA splicing by promoting the selection of the pre-mRNA branch-site adenosine, the nucleophile for the first step of splicing. Within the 17S U2 SnRNP complex, HTATSF1 is required to stabilize the branchpoint-interacting stem loop. HTATSF1 is displaced from the 17S U2 SnRNP complex before the stable addition of the 17S U2 SnRNP complex to the spliceosome, destabilizing the branchpoint-interacting stem loop and allowing to probe intron branch site sequences. Also acts as a regulator of transcriptional elongation, possibly by mediating the reciprocal stimulatory effect of splicing on transcriptional elongation. Involved in double-strand break (DSB) repair via homologous recombination in S-phase by promoting the recruitment of TOPBP1 to DNA damage sites. Mechanistically, HTATSF1 is (1) recruited to DNA damage sites in S-phase via interaction with poly-ADP-ribosylated RPA1 and (2) phosphorylated by CK2, promoting recruitment of TOPBP1, thereby facilitating RAD51 nucleofilaments formation and RPA displacement, followed by homologous recombination. In terms of biological role, (Microbial infection) In case of infection by HIV-1, it is up-regulated by the HIV-1 proteins NEF and gp120, acts as a cofactor required for the Tat-enhanced transcription of the virus. The chain is 17S U2 SnRNP complex component HTATSF1 from Homo sapiens (Human).